The following is a 578-amino-acid chain: Putative ankyrin repeat protein FPV022 (578 aa).

ANK repeat units lie at residues 4–34 (RRKSAFKRAIDEDDVDIIRKLLSYKPIDLNK), 38–67 (KNRTILCRAVSMKSHKVAEFLLSNGSKMSA), 68–97 (CKVPPLIISVRNKDLTMAKILVSYGASVDV), 100–129 (KGETPLLTAIKTGYIEIIDYLLSLEPSGPY), 160–189 (YGHTALYYAVKKGNLSLIKLLVENKAITDN), 222–251 (EGTTALHYAVEAERLEAVRYLLDIGCDPKV), 255–287 (HSVSPLYYAIKRKNKIILDELIKFYTVEFMVNM), 320–349 (YLSELLYESIKTNNPEIVSLILGLGANINK), 353–382 (YGNIPLQTAIIYQTDNVFNLLLQKGADVNA), 386–415 (DGNTILHTLAACCKYKKIKLVLDLGSDINS), and 419–449 (NGRTPIEEACPCKKTIRTLISHLIIMIKKNK).

This Fowlpox virus (strain NVSL) (FPV) protein is Putative ankyrin repeat protein FPV022.